Reading from the N-terminus, the 212-residue chain is MAGGGGLKFVEMDVRNDDAYKLAKEWFDEVVFSVKFQDSIDKELLREAERNYGLVAILLVNPRLSIVKEAVQRFKQNYLIYVESSDLRTIRYSIERGVDAIISPWVGRKDPGIDHTLARMMAKKGVALGFSLRPLLEASPYDKANILKFMRKAWQLTNKYKVKRFITSSANEKWHIRWPRDLATLGIIIGMEVQQAKAALSTYPDIILKRLK.

The protein belongs to the eukaryotic/archaeal RNase P protein component 3 family. In terms of assembly, consists of a catalytic RNA component and at least 4-5 protein subunits.

Its subcellular location is the cytoplasm. The catalysed reaction is Endonucleolytic cleavage of RNA, removing 5'-extranucleotides from tRNA precursor.. Part of ribonuclease P, a protein complex that generates mature tRNA molecules by cleaving their 5'-ends. This Pyrococcus abyssi (strain GE5 / Orsay) protein is Ribonuclease P protein component 3.